The primary structure comprises 572 residues: Asparagine synthetase [glutamine-hydrolyzing] 1 (572 aa).

The active-site For GATase activity is the C2. The 185-residue stretch at 2 to 186 (CGIFAAFRHE…PGHVYDSKTD (185 aa)) folds into the Glutamine amidotransferase type-2 domain. Residues 49-53 (RLAIV), 74-76 (NGE), and D97 each bind L-glutamine. The Asparagine synthetase domain maps to 194–546 (PDWLDEKRIP…QKTVADTVMR (353 aa)). L233 is an ATP binding site. At S265 the chain carries Phosphoserine. Residues I292 and 366 to 367 (SG) contribute to the ATP site. S509 is subject to Phosphoserine.

The catalysed reaction is L-aspartate + L-glutamine + ATP + H2O = L-asparagine + L-glutamate + AMP + diphosphate + H(+). It participates in amino-acid biosynthesis; L-asparagine biosynthesis; L-asparagine from L-aspartate (L-Gln route): step 1/1. This is Asparagine synthetase [glutamine-hydrolyzing] 1 (ASN1) from Saccharomyces cerevisiae (strain ATCC 204508 / S288c) (Baker's yeast).